We begin with the raw amino-acid sequence, 623 residues long: Chaperone protein DnaK (623 aa).

Thr-175 is modified (phosphothreonine; by autocatalysis). Residues 578 to 623 (ANPEGAPGAGFDPNNMGGANAGNASAGNDKKDDNVVDADFKVEDDK) form a disordered region. Residues 591-604 (NNMGGANAGNASAG) are compositionally biased toward low complexity. Basic and acidic residues predominate over residues 605–623 (NDKKDDNVVDADFKVEDDK).

The protein belongs to the heat shock protein 70 family.

Acts as a chaperone. The polypeptide is Chaperone protein DnaK (Clostridium botulinum (strain 657 / Type Ba4)).